A 193-amino-acid chain; its full sequence is Rho-related protein racB (193 aa).

GTP contacts are provided by Ala13, Gly15, Lys16, Thr17, Cys18, Tyr32, Thr35, Gly60, Lys116, Asp118, and Ala159. Thr17 lines the Mg(2+) pocket. Short sequence motifs (switch) lie at residues 26–37 (NAFPTEYVPTVF) and 57–75 (DTAG…YPQT). Thr35 contacts Mg(2+). A Cysteine methyl ester modification is found at Cys190. Cys190 is lipidated: S-geranylgeranyl cysteine. The propeptide at 191–193 (LIF) is removed in mature form.

The protein belongs to the small GTPase superfamily. Rho family. The cofactor is Mg(2+).

It is found in the cell membrane. The protein resides in the cytoplasm. The protein localises to the cytoskeleton. The enzyme catalyses GTP + H2O = GDP + phosphate + H(+). With respect to regulation, regulated by guanine nucleotide exchange factors (GEFs) which promote the exchange of bound GDP for free GTP, GTPase activating proteins (GAPs) which increase the GTP hydrolysis activity, and GDP dissociation inhibitors which inhibit the dissociation of the nucleotide from the GTPase. Functionally, small GTPase which cycles between active GTP-bound and inactive GDP-bound states. The chain is Rho-related protein racB from Entamoeba histolytica (strain ATCC 30459 / HM-1:IMSS / ABRM).